Reading from the N-terminus, the 75-residue chain is Protein Tlp homolog (75 aa).

The disordered stretch occupies residues 52–75; sequence RREALDGMREEIKDEARDKKNGYM.

The protein belongs to the Tlp family.

This chain is Protein Tlp homolog, found in Clostridium botulinum (strain Okra / Type B1).